The following is a 159-amino-acid chain: Putative pre-16S rRNA nuclease (159 aa).

This sequence belongs to the YqgF nuclease family.

It localises to the cytoplasm. Functionally, could be a nuclease involved in processing of the 5'-end of pre-16S rRNA. The sequence is that of Putative pre-16S rRNA nuclease from Bartonella quintana (strain Toulouse) (Rochalimaea quintana).